We begin with the raw amino-acid sequence, 69 residues long: MSYKKLYQLTAIFSLPLTILLVSLSSLRIVGEGNSYVDVFLSFIIFLGFIELIHGIRKILVWSGWKNGS.

Residues 1 to 6 are Cytoplasmic-facing; sequence MSYKKL. Residues 7-29 traverse the membrane as a helical segment; that stretch reads YQLTAIFSLPLTILLVSLSSLRI. The Periplasmic portion of the chain corresponds to 30–38; that stretch reads VGEGNSYVD. A helical membrane pass occupies residues 39-61; the sequence is VFLSFIIFLGFIELIHGIRKILV. At 62 to 69 the chain is on the cytoplasmic side; it reads WSGWKNGS.

It localises to the cell membrane. Protects a microcin H47-producer cell against microcin H47. The protein is Microcin H47 immunity protein MchI (mchI) of Escherichia coli.